The sequence spans 120 residues: Ribosome-binding factor A (120 aa).

The protein belongs to the RbfA family. In terms of assembly, monomer. Binds 30S ribosomal subunits, but not 50S ribosomal subunits or 70S ribosomes.

It localises to the cytoplasm. In terms of biological role, one of several proteins that assist in the late maturation steps of the functional core of the 30S ribosomal subunit. Associates with free 30S ribosomal subunits (but not with 30S subunits that are part of 70S ribosomes or polysomes). Required for efficient processing of 16S rRNA. May interact with the 5'-terminal helix region of 16S rRNA. The protein is Ribosome-binding factor A of Campylobacter jejuni subsp. jejuni serotype O:6 (strain 81116 / NCTC 11828).